We begin with the raw amino-acid sequence, 252 residues long: DNA-directed RNA polymerase III subunit rpc8 (252 aa).

Residues 214 to 252 (WTNQSAGDDDENEEDGGENQDDEVAEDDGGEEPTIEEDE) form a disordered region. Residues 220–252 (GDDDENEEDGGENQDDEVAEDDGGEEPTIEEDE) are compositionally biased toward acidic residues.

This sequence belongs to the eukaryotic RPB7/RPC8 RNA polymerase subunit family. Component of the RNA polymerase III (Pol III) complex consisting of several subunits.

The protein resides in the nucleus. In terms of biological role, DNA-dependent RNA polymerase catalyzes the transcription of DNA into RNA using the four ribonucleoside triphosphates as substrates. This chain is DNA-directed RNA polymerase III subunit rpc8 (polr3h-1), found in Dictyostelium discoideum (Social amoeba).